Reading from the N-terminus, the 83-residue chain is MSSGGLLLLLGLLTLWEALTPVSSTDRPEFCELPEDSGPCKGLFHVFYYNPDQSQCLEFIYGGCYGNANNFKTIEECKRTCAA.

Positions 1–24 (MSSGGLLLLLGLLTLWEALTPVSS) are cleaved as a signal peptide. The 51-residue stretch at 31 to 81 (CELPEDSGPCKGLFHVFYYNPDQSQCLEFIYGGCYGNANNFKTIEECKRTC) folds into the BPTI/Kunitz inhibitor domain. 3 disulfide bridges follow: cysteine 31–cysteine 81, cysteine 40–cysteine 64, and cysteine 56–cysteine 77.

Belongs to the venom Kunitz-type family. In terms of tissue distribution, expressed by the venom gland.

It is found in the secreted. Serine protease inhibitor. This is Kunitz-type serine protease inhibitor nigrescinin-2 from Cryptophis nigrescens (Eastern small-eyed snake).